The sequence spans 246 residues: tRNA pseudouridine synthase A (246 aa).

The Nucleophile role is filled by aspartate 53. Residue tyrosine 111 participates in substrate binding.

Belongs to the tRNA pseudouridine synthase TruA family. As to quaternary structure, homodimer.

The enzyme catalyses uridine(38/39/40) in tRNA = pseudouridine(38/39/40) in tRNA. Functionally, formation of pseudouridine at positions 38, 39 and 40 in the anticodon stem and loop of transfer RNAs. In Anoxybacillus flavithermus (strain DSM 21510 / WK1), this protein is tRNA pseudouridine synthase A.